A 222-amino-acid chain; its full sequence is Phosphoglycolate phosphatase (222 aa).

The Nucleophile role is filled by Asp-12. The Mg(2+) site is built by Asp-12, Asp-14, and Asp-175.

The protein belongs to the HAD-like hydrolase superfamily. CbbY/CbbZ/Gph/YieH family. Requires Mg(2+) as cofactor.

It carries out the reaction 2-phosphoglycolate + H2O = glycolate + phosphate. The protein operates within organic acid metabolism; glycolate biosynthesis; glycolate from 2-phosphoglycolate: step 1/1. In terms of biological role, specifically catalyzes the dephosphorylation of 2-phosphoglycolate. Is involved in the dissimilation of the intracellular 2-phosphoglycolate formed during the DNA repair of 3'-phosphoglycolate ends, a major class of DNA lesions induced by oxidative stress. The polypeptide is Phosphoglycolate phosphatase (Chromobacterium violaceum (strain ATCC 12472 / DSM 30191 / JCM 1249 / CCUG 213 / NBRC 12614 / NCIMB 9131 / NCTC 9757 / MK)).